A 116-amino-acid polypeptide reads, in one-letter code: Large ribosomal subunit protein bL17 (116 aa).

The protein belongs to the bacterial ribosomal protein bL17 family. In terms of assembly, part of the 50S ribosomal subunit. Contacts protein L32.

This Prochlorococcus marinus (strain MIT 9515) protein is Large ribosomal subunit protein bL17.